Consider the following 221-residue polypeptide: Sperm acrosome membrane-associated protein 3 (221 aa).

Residues 1–69 lie on the Cytoplasmic side of the membrane; that stretch reads MGICMSMYTQ…EARSRAPRRQ (69 aa). Residues 70–90 traverse the membrane as a helical; Signal-anchor for type II membrane protein segment; sequence LCPPGITWLALAYLLSCLLAS. Residues 91 to 221 lie on the Extracellular side of the membrane; that stretch reads SKAKVFSRCE…LSDWVDGCDF (131 aa). Residues 94-221 enclose the C-type lysozyme domain; sequence KVFSRCELAK…LSDWVDGCDF (128 aa). Cystine bridges form between C99/C219, C123/C207, C157/C172, and C168/C186.

It belongs to the glycosyl hydrolase 22 family. As to quaternary structure, interacts with ASTL. The processed form is expressed in sperm (at protein level). Expressed strongly in testis and epididymis and weakly in pancreas.

It localises to the cytoplasmic vesicle. The protein resides in the secretory vesicle. Its subcellular location is the acrosome membrane. It is found in the secreted. Functionally, sperm surface membrane protein that may be involved in sperm-egg plasma membrane adhesion and fusion during fertilization. It could be a potential receptor for the egg oligosaccharide residue N-acetylglucosamine, which is present in the extracellular matrix over the egg plasma membrane. The processed form has no detectable bacteriolytic activity in vitro. The sequence is that of Sperm acrosome membrane-associated protein 3 (Spaca3) from Mus musculus (Mouse).